Consider the following 959-residue polypeptide: Mitogen-activated protein kinase kinase kinase 13 (959 aa).

The segment at 1–47 (MANPQEHLSCSSLPHLPLTENKTSGGRNELAAMGNHPSPKLPEDPQE) is disordered. The segment covering 7–18 (HLSCSSLPHLPL) has biased composition (low complexity). The Protein kinase domain maps to 167–408 (ISELQWLGSG…FRQTLMHLDI (242 aa)). ATP is bound by residues 173–181 (LGSGAQGAV) and K194. The active-site Proton acceptor is D278. Leucine-zipper stretches follow at residues 432 to 453 (VKKH…DEEL) and 485 to 506 (LSAI…EQAV). 4 disordered regions span residues 533-599 (KRKG…GSHS), 739-828 (GSLD…RQRP), 842-902 (SSEN…LSDK), and 927-959 (NPVQ…SATW). Positions 566–577 (SPLSGSPKMSTA) are enriched in polar residues. The segment covering 581–593 (SRYRSKPRHRRGN) has biased composition (basic residues). Polar residues-rich tracts occupy residues 754-774 (DLSS…SERT) and 780-790 (SGCQSGISHQF). Positions 808–820 (DSSEEEGEVDSEV) are enriched in acidic residues. A compositionally biased stretch (basic and acidic residues) spans 866 to 876 (SANRRQDRLAE). The span at 934 to 943 (SDCDSSEGEC) shows a compositional bias: acidic residues. The segment covering 947–959 (TVRTSKNYSSATW) has biased composition (polar residues).

The protein belongs to the protein kinase superfamily. STE Ser/Thr protein kinase family. MAP kinase kinase kinase subfamily. In terms of assembly, homodimer; forms dimers through the leucine-zipper motif. Interacts with the C-terminus of MAPK8IP1 through the kinase catalytic domain. Binds PRDX3. Associates with the IKK complex through the kinase domain. Requires Mg(2+) as cofactor. Post-translationally, autophosphorylated on serine and threonine residues.

The protein resides in the cytoplasm. Its subcellular location is the membrane. The enzyme catalyses L-seryl-[protein] + ATP = O-phospho-L-seryl-[protein] + ADP + H(+). It catalyses the reaction L-threonyl-[protein] + ATP = O-phospho-L-threonyl-[protein] + ADP + H(+). With respect to regulation, activated by autophosphorylation and homodimerization. Functionally, activates the JUN N-terminal pathway through activation of the MAP kinase kinase MAP2K7. Acts synergistically with PRDX3 to regulate the activation of NF-kappa-B in the cytosol. This activation is kinase-dependent and involves activating the IKK complex, the IKBKB-containing complex that phosphorylates inhibitors of NF-kappa-B. The protein is Mitogen-activated protein kinase kinase kinase 13 (Map3k13) of Mus musculus (Mouse).